A 449-amino-acid chain; its full sequence is Dynein axonemal assembly factor 3 (449 aa).

Belongs to the DNAAF3 family.

The protein localises to the cytoplasm. The protein resides in the dynein axonemal particle. In terms of biological role, required for the assembly of axonemal inner and outer dynein arms. Involved in preassembly of dyneins into complexes before their transport into cilia. The polypeptide is Dynein axonemal assembly factor 3 (dnaaf3) (Xenopus tropicalis (Western clawed frog)).